We begin with the raw amino-acid sequence, 517 residues long: Aldehyde dehydrogenase, mitochondrial (517 aa).

Residues 1–17 constitute a mitochondrion transit peptide; sequence MLRAAARFGPRLGRRLL. The short motif at 9 to 24 is the SIFI-degron element; sequence GPRLGRRLLSAAATQA. N6-acetyllysine is present on residues lysine 52, lysine 73, lysine 78, and lysine 159. Residue 262–267 participates in NAD(+) binding; that stretch reads GSTEIG. Glutamate 285 acts as the Proton acceptor in catalysis. Residue cysteine 319 is the Nucleophile of the active site. An N6-acetyllysine mark is found at lysine 368, lysine 383, lysine 426, lysine 428, and lysine 451.

Belongs to the aldehyde dehydrogenase family. In terms of assembly, homotetramer. In response to mitochondrial stress, the precursor protein is ubiquitinated by the SIFI complex in the cytoplasm before mitochondrial import, leading to its degradation. Within the SIFI complex, UBR4 initiates ubiquitin chain that are further elongated or branched by KCMF1.

Its subcellular location is the mitochondrion matrix. It carries out the reaction an aldehyde + NAD(+) + H2O = a carboxylate + NADH + 2 H(+). It functions in the pathway alcohol metabolism; ethanol degradation; acetate from ethanol: step 2/2. Required for clearance of cellular formaldehyde, a cytotoxic and carcinogenic metabolite that induces DNA damage. This Homo sapiens (Human) protein is Aldehyde dehydrogenase, mitochondrial (ALDH2).